The following is a 293-amino-acid chain: 4-hydroxy-tetrahydrodipicolinate synthase (293 aa).

Thr45 serves as a coordination point for pyruvate. Tyr133 functions as the Proton donor/acceptor in the catalytic mechanism. Lys161 acts as the Schiff-base intermediate with substrate in catalysis. Ile203 contacts pyruvate.

Belongs to the DapA family. Homotetramer; dimer of dimers.

Its subcellular location is the cytoplasm. The enzyme catalyses L-aspartate 4-semialdehyde + pyruvate = (2S,4S)-4-hydroxy-2,3,4,5-tetrahydrodipicolinate + H2O + H(+). It functions in the pathway amino-acid biosynthesis; L-lysine biosynthesis via DAP pathway; (S)-tetrahydrodipicolinate from L-aspartate: step 3/4. In terms of biological role, catalyzes the condensation of (S)-aspartate-beta-semialdehyde [(S)-ASA] and pyruvate to 4-hydroxy-tetrahydrodipicolinate (HTPA). This is 4-hydroxy-tetrahydrodipicolinate synthase from Shewanella piezotolerans (strain WP3 / JCM 13877).